The primary structure comprises 295 residues: Geranylfarnesyl diphosphate synthase (295 aa).

Isopentenyl diphosphate is bound by residues Lys51, Arg54, and His83. The Mg(2+) site is built by Asp90 and Asp94. Position 99 (Arg99) interacts with an all-trans-polyprenyl diphosphate. Arg100 contacts isopentenyl diphosphate. 3 residues coordinate an all-trans-polyprenyl diphosphate: Lys174, Thr175, and Gln212.

The protein belongs to the FPP/GGPP synthase family. Homodimer. Requires Mg(2+) as cofactor.

It catalyses the reaction isopentenyl diphosphate + (2E,6E,10E)-geranylgeranyl diphosphate = (2E,6E,10E,14E)-geranylfarnesyl diphosphate + diphosphate. Functionally, involved in biosynthesis of the polyprenyl side-chain of methanophenazine, an electron carrier utilized for methanogenesis. Catalyzes the condensation of isopentenyl pyrophosphate with the allylic pyrophosphates to yield geranylfarnesyl diphosphate (GFPP). It prefers geranylgeranyl diphosphate (GGPP) and farnesyl diphosphate (FPP) as allylic substrate. This is Geranylfarnesyl diphosphate synthase from Methanosarcina mazei (strain ATCC BAA-159 / DSM 3647 / Goe1 / Go1 / JCM 11833 / OCM 88) (Methanosarcina frisia).